A 207-amino-acid chain; its full sequence is Guanylate kinase (207 aa).

The Guanylate kinase-like domain maps to 4-184; that stretch reads GTLYIVSAPS…ALSDLKTIIR (181 aa). 11–18 is a binding site for ATP; sequence APSGAGKS.

It belongs to the guanylate kinase family.

It localises to the cytoplasm. The catalysed reaction is GMP + ATP = GDP + ADP. It catalyses the reaction dZMP + ATP = dZDP + ADP. The protein operates within purine metabolism. In terms of biological role, essential for recycling GMP and indirectly, cGMP. Functionally, (Microbial infection) Catalyzes the phosphorylation of dZMP to dZDP, when the bacterium is infected by a phage that produces the substrate for the synthesis of dZTP (2- amino-2'-deoxyadenosine 5'-triphosphate), which is then used by the phage as a DNA polymerase substrate. The polypeptide is Guanylate kinase (Salmonella choleraesuis (strain SC-B67)).